The chain runs to 372 residues: Cytochrome b (372 aa).

Transmembrane regions (helical) follow at residues 25-45 (FGSM…FLAI), 69-90 (WIMQ…YIHI), 105-125 (WLSG…GYVL), and 170-190 (FFAL…IHII). The heme b site is built by His-75 and His-89. Residues His-174 and His-188 each contribute to the heme b site. His-193 is an a ubiquinone binding site. Helical transmembrane passes span 218–238 (YKDM…LSFL), 280–300 (LGGT…PFTH), 312–332 (LSQT…WTAT), and 339–358 (FITI…IMTP).

It belongs to the cytochrome b family. The cytochrome bc1 complex contains 3 respiratory subunits (MT-CYB, CYC1 and UQCRFS1), 2 core proteins (UQCRC1 and UQCRC2) and probably 6 low-molecular weight proteins. It depends on heme b as a cofactor.

The protein localises to the mitochondrion inner membrane. Component of the ubiquinol-cytochrome c reductase complex (complex III or cytochrome b-c1 complex) that is part of the mitochondrial respiratory chain. The b-c1 complex mediates electron transfer from ubiquinol to cytochrome c. Contributes to the generation of a proton gradient across the mitochondrial membrane that is then used for ATP synthesis. The sequence is that of Cytochrome b (MT-CYB) from Aspidelaps scutatus (Shield-nose snake).